Consider the following 317-residue polypeptide: L-lactate dehydrogenase (317 aa).

NAD(+)-binding positions include V17, D38, K43, Y69, and G83–A84. Q86 and R92 together coordinate substrate. NAD(+) contacts are provided by residues S105, A122–N124, and S147. N124–D127 provides a ligand contact to substrate. Residue D152–R155 coordinates substrate. 2 residues coordinate beta-D-fructose 1,6-bisphosphate: R157 and H172. The Proton acceptor role is filled by H179. A Phosphotyrosine modification is found at Y224. T233 lines the substrate pocket.

The protein belongs to the LDH/MDH superfamily. LDH family. In terms of assembly, homotetramer.

The protein localises to the cytoplasm. The catalysed reaction is (S)-lactate + NAD(+) = pyruvate + NADH + H(+). Its pathway is fermentation; pyruvate fermentation to lactate; (S)-lactate from pyruvate: step 1/1. With respect to regulation, allosterically activated by fructose 1,6-bisphosphate (FBP). In terms of biological role, catalyzes the conversion of lactate to pyruvate. This chain is L-lactate dehydrogenase, found in Bacillus caldotenax.